We begin with the raw amino-acid sequence, 533 residues long: MNEENIDGTNGCSKVRTGIQNEAALLALMEKTGYNMVQENGQRKFGGPPPGWEGPPPPRGCEVFVGKIPRDMYEDELVPVFERAGKIYEFRLMMEFSGENRGYAFVMYTTKEEAQLAIRILNNYEIRPGKFIGVCVSLDNCRLFIGAIPKEKKKEEILDEMKKVTEGVVDVIVYPSATDKTKNRGFAFVEYESHRAAAMARRKLIPGTFQLWGHTIQVDWADPEKEVDEETMQRVKVLYVRNLMISTTEETIKAEFNKFKPGAVERVKKLRDYAFVHFFNREDAVAAMSVMNGKCIDGASIEVTLAKPVNKENTWRQHLNGQISPNSENLIVFANKEESHPKTLGKLPTLPARLNGQHSPSPPEVERCTYPFYPGTKLTPISMYSLKSNHFNSAVMHLDYYCNKNNWAPPEYYLYSTTSQDGKVLLVYKIVIPAIANGSQSYFMPDKLCTTLEDAKELAAQFTLLHLDYNFHRSSINSLSPVSATLSSGTPSVLPYTSRPYSYPGYPLSPTISLANGSHVGQRLCISNQASFF.

3 RRM domains span residues 61-139, 141-223, and 236-308; these read CEVF…VSLD, CRLF…WADP, and KVLY…LAKP.

As to quaternary structure, interacts with YTHDC2, MEIOC, MOV10, CNOT6L, DDX4, UPF1 and PABPC1.

It localises to the cytoplasm. Its function is as follows. Essential for male and female fertility, playing a crucial role in regulating germ cell development by ensuring the proper progression of meiosis prophase I. Regulates mitotic-to-meiotic transition in spermatogenesis by forming a complex with MEIOC and YTHDC2 which recognizes and down-regulates mitotic transcripts for a successful meiotic entry. Required for normal synaptonemal complex formation during meiosis, binding meiotic cohesin subunit mRNAs containing GCCUAU/GUUCGA motifs in their 3'UTRs regions and positively regulating their translation. Required for spermatogonial differentiation in both developing and adult testis. The protein is Probable RNA-binding protein 46 (RBM46) of Homo sapiens (Human).